We begin with the raw amino-acid sequence, 270 residues long: Decarboxylase NovR (270 aa).

Belongs to the aldolase class II family.

Its pathway is antibiotic biosynthesis; novobiocin biosynthesis. May mediate the 2 consecutive oxidative decarboxylation steps in the biosynthesis of the prenylated hydroxybenzoic acid moiety of novobiocin, an aminocoumarin family antibiotic that targets bacterial DNA gyrases. The protein is Decarboxylase NovR (novR) of Streptomyces niveus (Streptomyces spheroides).